The primary structure comprises 310 residues: Protein BIG GRAIN 1 (310 aa).

Residues 81-141 form a disordered region; the sequence is RAPGPHATTS…KKAKKPGASI (61 aa). The segment covering 90–106 has biased composition (low complexity); the sequence is SSSSECSSYGGFSSSEA.

This sequence belongs to the BIG GRAIN 1 (BG1) plant protein family.

It localises to the cell membrane. Functionally, involved in auxin transport. Positive regulator of the auxin signaling pathway involved in gravitropism, plant growth and grain development. This chain is Protein BIG GRAIN 1, found in Oryza sativa subsp. indica (Rice).